The primary structure comprises 216 residues: Ephrin-A1 (216 aa).

Residues Met-1 to Gly-28 form the signal peptide. The Ephrin RBD domain occupies Glu-29–Thr-161. N-linked (GlcNAc...) asparagine glycosylation occurs at Asn-36. Cys-61 and Cys-102 are joined by a disulfide. A disordered region spans residues Thr-162 to Glu-181. Ser-195 carries GPI-anchor amidated serine lipidation. A propeptide spans Ala-196–Leu-216 (removed in mature form).

Belongs to the ephrin family. Binds to the receptor tyrosine kinases EPHA2, EPHA4, EPHA5, EPHA6 and EPHA7. Also binds with low affinity to EPHA1.

It is found in the membrane. Cell surface GPI-bound ligand for Eph receptors, a family of receptor tyrosine kinases which are crucial for migration, repulsion and adhesion during neuronal, vascular and epithelial development. Binds promiscuously Eph receptors residing on adjacent cells, leading to contact-dependent bidirectional signaling into neighboring cells. The sequence is that of Ephrin-A1 (efna1) from Xenopus laevis (African clawed frog).